Reading from the N-terminus, the 329-residue chain is Carrier protein YMC2, mitochondrial (329 aa).

Residues 1–27 are disordered; it reads MSEEFPTPQLLDELEDQQKVTTPNEKR. The transit peptide at 1-33 directs the protein to the mitochondrion; sequence MSEEFPTPQLLDELEDQQKVTTPNEKRELSSNR. Solcar repeat units follow at residues 34-115, 143-226, and 238-325; these read VLKD…MKRF, SQYY…LVAR, and PPWK…VMRF. Helical transmembrane passes span 38-58, 84-104, 140-160, 205-225, 243-263, and 297-318; these read IFAG…FDTT, VFAF…CVSV, LPLS…SFLA, TMIR…ALVA, CLFG…LDVV, and FFKG…TFLT.

Belongs to the mitochondrial carrier (TC 2.A.29) family.

The protein localises to the mitochondrion inner membrane. This is Carrier protein YMC2, mitochondrial (YMC2) from Saccharomyces cerevisiae (strain ATCC 204508 / S288c) (Baker's yeast).